Consider the following 273-residue polypeptide: Undecaprenyl-diphosphatase (273 aa).

A run of 8 helical transmembrane segments spans residues 4 to 24, 48 to 68, 89 to 109, 116 to 136, 152 to 172, 193 to 213, 222 to 242, and 252 to 272; these read MELW…FAPV, AANT…VVVF, LNLI…VLFE, LFST…MIAA, ITYK…WPGF, ADFT…LSLL, ADIP…LLAI, and IRLV…YFLY.

The protein belongs to the UppP family.

The protein resides in the cell membrane. The enzyme catalyses di-trans,octa-cis-undecaprenyl diphosphate + H2O = di-trans,octa-cis-undecaprenyl phosphate + phosphate + H(+). Its function is as follows. Catalyzes the dephosphorylation of undecaprenyl diphosphate (UPP). Confers resistance to bacitracin. The polypeptide is Undecaprenyl-diphosphatase (Geobacillus kaustophilus (strain HTA426)).